The chain runs to 345 residues: Ferrochelatase (345 aa).

Fe cation is bound by residues H215 and E296.

This sequence belongs to the ferrochelatase family.

The protein resides in the cytoplasm. It catalyses the reaction heme b + 2 H(+) = protoporphyrin IX + Fe(2+). Its pathway is porphyrin-containing compound metabolism; protoheme biosynthesis; protoheme from protoporphyrin-IX: step 1/1. Catalyzes the ferrous insertion into protoporphyrin IX. The chain is Ferrochelatase from Rhodopseudomonas palustris (strain TIE-1).